Consider the following 363-residue polypeptide: Spermatogenesis-associated protein 22 (363 aa).

Polar residues-rich tracts occupy residues 1 to 12 (MKRSLNENSARS), 30 to 48 (QPLTSNPLKDDSGISTPSD), 98 to 108 (IQSNTGRSQGG), and 140 to 157 (NDGKNSCPVSSGAQQQKQ). 3 disordered regions span residues 1–51 (MKRS…DNYD), 98–127 (IQSNTGRSQGGWSYRDGNKNTSLKTWNKND), and 140–170 (NDGKNSCPVSSGAQQQKQLRIPEPPNLSRNK).

Component of a multiprotein complex with MEIOB and RPA2. Interacts with MEIOB. Interacts with the complex BRME1:HSF2BP:BRCA2. As to expression, highly expressed in adult testis.

Its subcellular location is the chromosome. In terms of biological role, meiosis-specific protein required for homologous recombination in meiosis I. The sequence is that of Spermatogenesis-associated protein 22 from Homo sapiens (Human).